The sequence spans 107 residues: Small ribosomal subunit protein bS16m (107 aa).

It belongs to the bacterial ribosomal protein bS16 family. As to quaternary structure, component of the mitochondrial small ribosomal subunit (mt-SSU). Mature N.crassa 74S mitochondrial ribosomes consist of a small (37S) and a large (54S) subunit. The 37S small subunit contains a 16S ribosomal RNA (16S mt-rRNA) and 32 different proteins. The 54S large subunit contains a 23S rRNA (23S mt-rRNA) and 42 different proteins.

The protein resides in the mitochondrion. Its function is as follows. Component of the mitochondrial ribosome (mitoribosome), a dedicated translation machinery responsible for the synthesis of mitochondrial genome-encoded proteins, including at least some of the essential transmembrane subunits of the mitochondrial respiratory chain. The mitoribosomes are attached to the mitochondrial inner membrane and translation products are cotranslationally integrated into the membrane. This chain is Small ribosomal subunit protein bS16m (cyt-21), found in Neurospora crassa (strain ATCC 24698 / 74-OR23-1A / CBS 708.71 / DSM 1257 / FGSC 987).